The chain runs to 147 residues: Probable disulfide formation protein (147 aa).

A helical membrane pass occupies residues 9 to 28 (NYSLYFAWLTALIATLGSLY). Cys-38 and Cys-41 are joined by a disulfide. Transmembrane regions (helical) follow at residues 43-62 (YQRV…AYRT) and 69-86 (YALP…YQYL). A disulfide bond links Cys-99 and Cys-106. The helical transmembrane segment at 115 to 138 (GFITLPFLGMLATLIMSFFLIMAF) threads the bilayer.

It belongs to the DsbB family. BdbC subfamily.

The protein localises to the cell inner membrane. In terms of biological role, required for disulfide bond formation in some proteins. The polypeptide is Probable disulfide formation protein (Coxiella burnetii (strain CbuK_Q154) (Coxiella burnetii (strain Q154))).